The primary structure comprises 134 residues: Endoribonuclease YbeY (134 aa).

The Zn(2+) site is built by histidine 94, histidine 98, and histidine 104.

The protein belongs to the endoribonuclease YbeY family. The cofactor is Zn(2+).

The protein localises to the cytoplasm. Functionally, single strand-specific metallo-endoribonuclease involved in late-stage 70S ribosome quality control and in maturation of the 3' terminus of the 16S rRNA. The sequence is that of Endoribonuclease YbeY from Campylobacter jejuni subsp. jejuni serotype O:23/36 (strain 81-176).